The sequence spans 354 residues: Uroporphyrinogen decarboxylase (354 aa).

Substrate contacts are provided by residues 27–31 (RQAGR), Asp-77, Tyr-154, Ser-209, and His-327.

It belongs to the uroporphyrinogen decarboxylase family. In terms of assembly, homodimer.

Its subcellular location is the cytoplasm. It catalyses the reaction uroporphyrinogen III + 4 H(+) = coproporphyrinogen III + 4 CO2. It participates in porphyrin-containing compound metabolism; protoporphyrin-IX biosynthesis; coproporphyrinogen-III from 5-aminolevulinate: step 4/4. Its function is as follows. Catalyzes the decarboxylation of four acetate groups of uroporphyrinogen-III to yield coproporphyrinogen-III. This chain is Uroporphyrinogen decarboxylase, found in Shewanella amazonensis (strain ATCC BAA-1098 / SB2B).